Reading from the N-terminus, the 144-residue chain is Large ribosomal subunit protein uL15 (144 aa).

The interval 1–53 (MRLNTLSPAEGAKHNAKRLGRGIGSGLGKTSGRGHKGQKARTGGGVRRGFEGG) is disordered. Residues 21 to 31 (RGIGSGLGKTS) are compositionally biased toward gly residues.

It belongs to the universal ribosomal protein uL15 family. As to quaternary structure, part of the 50S ribosomal subunit.

Binds to the 23S rRNA. This is Large ribosomal subunit protein uL15 from Histophilus somni (strain 129Pt) (Haemophilus somnus).